Consider the following 60-residue polypeptide: Large ribosomal subunit protein uL30 (60 aa).

The protein belongs to the universal ribosomal protein uL30 family. Part of the 50S ribosomal subunit.

This chain is Large ribosomal subunit protein uL30, found in Levilactobacillus brevis (strain ATCC 367 / BCRC 12310 / CIP 105137 / JCM 1170 / LMG 11437 / NCIMB 947 / NCTC 947) (Lactobacillus brevis).